A 678-amino-acid chain; its full sequence is Platelet endothelial cell adhesion molecule (678 aa).

The first 17 residues, 1-17, serve as a signal peptide directing secretion; sequence MLLALLLTMLLYASLQA. Residues 18-589 are Extracellular-facing; that stretch reads QENSFTINSI…VRVFLAPWKK (572 aa). Ig-like C2-type domains are found at residues 40-126, 135-213, 225-309, 315-391, 413-472, and 488-577; these read GQKL…PEVT, GGIV…FIRS, PKFQ…ILVN, PRPK…LVPV, GQII…NCHS, and PVDE…RSGP. Cysteines 47 and 99 form a disulfide. N-linked (GlcNAc...) asparagine glycosylation is found at Asn74 and Asn141. Intrachain disulfides connect Cys142–Cys195 and Cys245–Cys293. Residues Asn309, Asn345, Asn360, Asn424, and Asn540 are each glycosylated (N-linked (GlcNAc...) asparagine). Disulfide bonds link Cys336–Cys375, Cys420–Cys465, and Cys512–Cys561. The chain crosses the membrane as a helical span at residues 590–610; the sequence is GLIAVVVIGVVIAALIVAAKY. The Cytoplasmic portion of the chain corresponds to 611 to 678; that stretch reads YFLRKAKAKQ…EPHQENGRLP (68 aa). Positions 634–653 are disordered; it reads NSNSEKVSEPSVETNSHYDS. The ITIM motif motif lies at 658–663; that stretch reads VEYTEV. Residue Tyr660 is modified to Phosphotyrosine; by FER.

As to quaternary structure, trans-homodimer (via Ig-like C2-type 1 and Ig-like C2-type 2 domains); trans-homodimerization is required for cell-cell interaction. Forms a complex with BDKRB2 and GNAQ. Interacts with BDKRB2 and GNAQ. Interacts with PTPN11. Interacts with FER. Interacts with CD177; the interaction is Ca(2+)-dependent; the interaction is direct. In terms of processing, phosphorylated on Ser and Tyr residues after cellular activation. In endothelial cells Fyn mediates mechanical-force (stretch or pull) induced tyrosine phosphorylation. Phosphorylated on tyrosine residues by FER and FES in response to FCER1 activation. Post-translationally, palmitoylation by ZDHHC21 is necessary for cell surface expression in endothelial cells and enrichment in membrane rafts.

Its subcellular location is the cell membrane. It is found in the membrane raft. The protein resides in the cell junction. In terms of biological role, cell adhesion molecule which is required for leukocyte transendothelial migration (TEM) under most inflammatory conditions. Tyr-660 plays a critical role in TEM and is required for efficient trafficking of PECAM1 to and from the lateral border recycling compartment (LBRC) and is also essential for the LBRC membrane to be targeted around migrating leukocytes. Trans-homophilic interaction may play a role in endothelial cell-cell adhesion via cell junctions. Heterophilic interaction with CD177 plays a role in transendothelial migration of neutrophils. Homophilic ligation of PECAM1 prevents macrophage-mediated phagocytosis of neighboring viable leukocytes by transmitting a detachment signal. Promotes macrophage-mediated phagocytosis of apoptotic leukocytes by tethering them to the phagocytic cells; PECAM1-mediated detachment signal appears to be disabled in apoptotic leukocytes. Modulates bradykinin receptor BDKRB2 activation. Regulates bradykinin- and hyperosmotic shock-induced ERK1/2 activation in endothelial cells. Induces susceptibility to atherosclerosis. This Rattus norvegicus (Rat) protein is Platelet endothelial cell adhesion molecule (Pecam1).